A 405-amino-acid polypeptide reads, in one-letter code: Bone morphogenetic protein 4 (405 aa).

The N-terminal stretch at 1-19 (MIPGNRMLMVILLCQVLLG) is a signal peptide. The propeptide occupies 20–291 (GTNHASLIPE…GHALTRRARR (272 aa)). N-linked (GlcNAc...) asparagine glycans are attached at residues asparagine 144, asparagine 208, asparagine 347, and asparagine 362. Cystine bridges form between cysteine 305/cysteine 370, cysteine 334/cysteine 402, and cysteine 338/cysteine 404.

The protein belongs to the TGF-beta family. In terms of assembly, homodimer; disulfide-linked. Part of a complex consisting of TWSG1 and CHRD. Forms a ternary complex with chordin/CHRD and TSKU.

It localises to the secreted. Negatively regulates the structure and function of the limb apical ectodermal ridge. The protein is Bone morphogenetic protein 4 (BMP4) of Gallus gallus (Chicken).